Here is a 142-residue protein sequence, read N- to C-terminus: Small ribosomal subunit protein bS6 (142 aa).

Residues V96–E142 form a disordered region. The span at L103 to S124 shows a compositional bias: basic and acidic residues. Acidic residues predominate over residues A125–E142.

The protein belongs to the bacterial ribosomal protein bS6 family.

In terms of biological role, binds together with bS18 to 16S ribosomal RNA. This chain is Small ribosomal subunit protein bS6, found in Pseudomonas fluorescens (strain Pf0-1).